We begin with the raw amino-acid sequence, 388 residues long: Lipid-A-disaccharide synthase (388 aa).

The protein belongs to the LpxB family.

It catalyses the reaction a lipid X + a UDP-2-N,3-O-bis[(3R)-3-hydroxyacyl]-alpha-D-glucosamine = a lipid A disaccharide + UDP + H(+). It functions in the pathway bacterial outer membrane biogenesis; LPS lipid A biosynthesis. Its function is as follows. Condensation of UDP-2,3-diacylglucosamine and 2,3-diacylglucosamine-1-phosphate to form lipid A disaccharide, a precursor of lipid A, a phosphorylated glycolipid that anchors the lipopolysaccharide to the outer membrane of the cell. This Burkholderia pseudomallei (strain 1710b) protein is Lipid-A-disaccharide synthase.